Consider the following 149-residue polypeptide: UPF0179 protein Hlac_2319 (149 aa).

It belongs to the UPF0179 family.

In Halorubrum lacusprofundi (strain ATCC 49239 / DSM 5036 / JCM 8891 / ACAM 34), this protein is UPF0179 protein Hlac_2319.